The sequence spans 90 residues: Mitochondrial import inner membrane translocase subunit Tim10 (90 aa).

Residues 29–54 (CHRKCVPPHYKEAELSKGESVCLDRC) carry the Twin CX3C motif motif. 2 disulfide bridges follow: Cys29–Cys54 and Cys33–Cys50.

This sequence belongs to the small Tim family. Heterohexamer; composed of 3 copies of TIMM9 and 3 copies of TIMM10/TIM10A, named soluble 70 kDa complex. The complex forms a 6-bladed alpha-propeller structure and associates with the TIMM22 component of the TIM22 complex. Interacts with multi-pass transmembrane proteins in transit. Also forms a complex composed of TIMM9, TIMM10/TIM10A and FXC1/TIM10B.

It is found in the mitochondrion inner membrane. Its function is as follows. Mitochondrial intermembrane chaperone that participates in the import and insertion of multi-pass transmembrane proteins into the mitochondrial inner membrane. May also be required for the transfer of beta-barrel precursors from the TOM complex to the sorting and assembly machinery (SAM complex) of the outer membrane. Acts as a chaperone-like protein that protects the hydrophobic precursors from aggregation and guide them through the mitochondrial intermembrane space. The sequence is that of Mitochondrial import inner membrane translocase subunit Tim10 (Timm10) from Rattus norvegicus (Rat).